A 494-amino-acid chain; its full sequence is Glutamyl-tRNA(Gln) amidotransferase subunit A, mitochondrial (494 aa).

Active-site charge relay system residues include Lys-79 and Ser-160. The active-site Acyl-ester intermediate is Ser-184.

It belongs to the amidase family. GatA subfamily. As to quaternary structure, subunit of the heterotrimeric GatCAB amidotransferase (AdT) complex, composed of A, B and C subunits.

It is found in the mitochondrion. The enzyme catalyses L-glutamyl-tRNA(Gln) + L-glutamine + ATP + H2O = L-glutaminyl-tRNA(Gln) + L-glutamate + ADP + phosphate + H(+). In terms of biological role, allows the formation of correctly charged Gln-tRNA(Gln) through the transamidation of misacylated Glu-tRNA(Gln) in the mitochondria. The reaction takes place in the presence of glutamine and ATP through an activated gamma-phospho-Glu-tRNA(Gln). The protein is Glutamyl-tRNA(Gln) amidotransferase subunit A, mitochondrial of Aedes aegypti (Yellowfever mosquito).